Reading from the N-terminus, the 397-residue chain is Homocitrate synthase AksA (397 aa).

The Pyruvate carboxyltransferase domain maps to 19 to 270; it reads VIVYDTTLRD…DPGFNTEVLA (252 aa).

The protein belongs to the alpha-IPM synthase/homocitrate synthase family.

It catalyses the reaction acetyl-CoA + 2-oxoglutarate + H2O = (2R)-homocitrate + CoA + H(+). The catalysed reaction is 2-oxoadipate + acetyl-CoA + H2O = (R)-dihomocitrate + CoA + H(+). It carries out the reaction 2-oxoheptanedioate + acetyl-CoA + H2O = (R)-trihomocitrate + CoA + H(+). Its pathway is organic acid metabolism; 2-oxosuberate biosynthesis. Its function is as follows. Catalyzes the condensation of alpha-ketoglutarate and acetyl-CoA to form (R)-homocitrate. Can also catalyze the condensation of alpha-ketoadipate with acetyl-CoA to form (R)-homo(2)citrate, and the condensation of alpha-ketopimelate with acetyl-CoA to form (R)-homo(3)citrate. These reactions are part of the biosynthesis pathway of coenzyme B and biotin. In Methanopyrus kandleri (strain AV19 / DSM 6324 / JCM 9639 / NBRC 100938), this protein is Homocitrate synthase AksA (aksA).